The following is a 297-amino-acid chain: MSRHPMVTRLLCLVFSCLIILACSPAFAGHGAPKAQKTGILLVAFGTSVEEARPALDKMGDRVRAAHPDIPVRWAYTAKMIRAKLRAEGIAAPSPAEALAGMAEEGFTHVAVQSLHTIPGEEFHGLLETAHAFQGLPKGLTRVSVGLPLIGTTADAEAVAEALVASLPADRKPGEPVVFMGHGTPHPADICYPGLQYYLWRLDPDLLVGTVEGSPSFDNVMAELDVRKAKRVWLMPLMAVAGDHARNDMAGDEDDSWTSQLARRGIEAKPVLHGTAESDAVAAIWLRHLDDALARLN.

An N-terminal signal peptide occupies residues 1 to 28 (MSRHPMVTRLLCLVFSCLIILACSPAFA). Heme is bound at residue H124. H182 serves as the catalytic Proton acceptor. 3 residues coordinate Co(2+): H182, E212, and H244.

This sequence belongs to the CbiK family. As to quaternary structure, homotetramer; dimer of dimers.

It is found in the periplasm. The enzyme catalyses Co-sirohydrochlorin + 2 H(+) = sirohydrochlorin + Co(2+). It carries out the reaction siroheme + 2 H(+) = sirohydrochlorin + Fe(2+). Its function is as follows. Catalyzes the insertion of Co(2+) into sirohydrochlorin. To a lesser extent, is also able to insert Fe(2+) into sirohydrochlorin, yielding siroheme. Its periplasmic location means that it cannot participate in cobalamin biosynthesis and its genomic environment suggests it is likely to be associated with a heme or metal transport system. This chain is Sirohydrochlorin cobaltochelatase CbiKP (cbiKp), found in Nitratidesulfovibrio vulgaris (strain ATCC 29579 / DSM 644 / CCUG 34227 / NCIMB 8303 / VKM B-1760 / Hildenborough) (Desulfovibrio vulgaris).